The primary structure comprises 357 residues: Maleylacetate reductase 1 (357 aa).

It belongs to the iron-containing alcohol dehydrogenase family.

It carries out the reaction 3-oxoadipate + NAD(+) = maleylacetate + NADH + H(+). The enzyme catalyses 3-oxoadipate + NADP(+) = maleylacetate + NADPH + H(+). Its pathway is aromatic compound metabolism; 3-chlorocatechol degradation. Its function is as follows. Plays a major role in the degradation of chloroaromatic compounds by channeling maleylacetate and some of its substituted derivatives into the 3-oxoadipate pathway. This enzyme converts maleylacetate and 2-chloromaleylacetate with similar efficiencies. This is Maleylacetate reductase 1 (macA) from Rhodococcus opacus (Nocardia opaca).